Consider the following 201-residue polypeptide: Ubiquitin-conjugating enzyme E2 E2 (201 aa).

Residues Met-1–Asp-10 are compositionally biased toward basic and acidic residues. Positions Met-1 to Thr-55 are disordered. Ser-2 bears the N-acetylserine mark. Ser-11, Ser-15, Ser-18, and Ser-19 each carry phosphoserine. Residues Gly-21–Ile-45 show a composition bias toward basic and acidic residues. Positions Ser-46–Thr-55 are enriched in low complexity. One can recognise a UBC core domain in the interval Thr-55–Thr-201. Cys-139 acts as the Glycyl thioester intermediate in catalysis.

It belongs to the ubiquitin-conjugating enzyme family. Autoubiquitinated.

It catalyses the reaction S-ubiquitinyl-[E1 ubiquitin-activating enzyme]-L-cysteine + [E2 ubiquitin-conjugating enzyme]-L-cysteine = [E1 ubiquitin-activating enzyme]-L-cysteine + S-ubiquitinyl-[E2 ubiquitin-conjugating enzyme]-L-cysteine.. The protein operates within protein modification; protein ubiquitination. In terms of biological role, accepts ubiquitin from the E1 complex and catalyzes its covalent attachment to other proteins. In vitro catalyzes 'Lys-11'- and 'Lys-48'-, as well as 'Lys-63'-linked polyubiquitination. Catalyzes the ISGylation of influenza A virus NS1 protein. This is Ubiquitin-conjugating enzyme E2 E2 (Ube2e2) from Mus musculus (Mouse).